A 249-amino-acid chain; its full sequence is 2,3-bisphosphoglycerate-dependent phosphoglycerate mutase (249 aa).

Substrate is bound by residues 11–18 (RHGESEWN), 24–25 (TG), arginine 63, 90–93 (ERHY), lysine 101, and 117–118 (RR). Histidine 12 (tele-phosphohistidine intermediate) is an active-site residue. Glutamate 90 acts as the Proton donor/acceptor in catalysis. The disordered stretch occupies residues 119–138 (SYDTPPPPIERGSTYSQDAD). Substrate is bound at residue 184-185 (GN).

This sequence belongs to the phosphoglycerate mutase family. BPG-dependent PGAM subfamily.

It catalyses the reaction (2R)-2-phosphoglycerate = (2R)-3-phosphoglycerate. Its pathway is carbohydrate degradation; glycolysis; pyruvate from D-glyceraldehyde 3-phosphate: step 3/5. Functionally, catalyzes the interconversion of 2-phosphoglycerate and 3-phosphoglycerate. This chain is 2,3-bisphosphoglycerate-dependent phosphoglycerate mutase, found in Mycolicibacterium paratuberculosis (strain ATCC BAA-968 / K-10) (Mycobacterium paratuberculosis).